Reading from the N-terminus, the 61-residue chain is Ferredoxin-3 (61 aa).

4Fe-4S ferredoxin-type domains lie at 2–31 and 32–61; these read YKIT…LQDG and KAVA…VEEN. Cysteine 11 and cysteine 17 together coordinate [3Fe-4S] cluster. Residues cysteine 21, cysteine 41, cysteine 44, and cysteine 47 each coordinate [4Fe-4S] cluster. Position 51 (cysteine 51) interacts with [3Fe-4S] cluster.

Requires [3Fe-4S] cluster as cofactor. It depends on [4Fe-4S] cluster as a cofactor.

Its function is as follows. Ferredoxins are iron-sulfur proteins that transfer electrons in a wide variety of metabolic reactions. This Desulfocurvibacter africanus (Desulfovibrio africanus) protein is Ferredoxin-3.